The following is a 333-amino-acid chain: Glycerol-3-phosphate dehydrogenase [NAD(P)+] (333 aa).

NADPH-binding residues include S10, W11, H31, R32, and K105. Positions 105, 136, and 138 each coordinate sn-glycerol 3-phosphate. An NADPH-binding site is contributed by A140. The sn-glycerol 3-phosphate site is built by K191, D244, S254, R255, and N256. Catalysis depends on K191, which acts as the Proton acceptor. R255 contacts NADPH. I279 and E281 together coordinate NADPH.

It belongs to the NAD-dependent glycerol-3-phosphate dehydrogenase family.

The protein resides in the cytoplasm. The enzyme catalyses sn-glycerol 3-phosphate + NAD(+) = dihydroxyacetone phosphate + NADH + H(+). The catalysed reaction is sn-glycerol 3-phosphate + NADP(+) = dihydroxyacetone phosphate + NADPH + H(+). It functions in the pathway membrane lipid metabolism; glycerophospholipid metabolism. Catalyzes the reduction of the glycolytic intermediate dihydroxyacetone phosphate (DHAP) to sn-glycerol 3-phosphate (G3P), the key precursor for phospholipid synthesis. In Pelodictyon phaeoclathratiforme (strain DSM 5477 / BU-1), this protein is Glycerol-3-phosphate dehydrogenase [NAD(P)+].